The chain runs to 408 residues: 1-deoxy-D-xylulose 5-phosphate reductoisomerase (408 aa).

Residues Thr-27, Gly-28, Ser-29, Ile-30, Ala-53, Arg-54, Asn-55, and Asn-140 each coordinate NADPH. Lys-141 lines the 1-deoxy-D-xylulose 5-phosphate pocket. An NADPH-binding site is contributed by Glu-142. Asp-166 provides a ligand contact to Mn(2+). Residues Ser-167, Glu-168, Ser-192, and His-215 each coordinate 1-deoxy-D-xylulose 5-phosphate. Glu-168 serves as a coordination point for Mn(2+). Position 221 (Gly-221) interacts with NADPH. 1-deoxy-D-xylulose 5-phosphate contacts are provided by Ser-228, Asn-233, Lys-234, and Glu-237. Glu-237 contributes to the Mn(2+) binding site.

The protein belongs to the DXR family. It depends on Mg(2+) as a cofactor. Requires Mn(2+) as cofactor.

The enzyme catalyses 2-C-methyl-D-erythritol 4-phosphate + NADP(+) = 1-deoxy-D-xylulose 5-phosphate + NADPH + H(+). The protein operates within isoprenoid biosynthesis; isopentenyl diphosphate biosynthesis via DXP pathway; isopentenyl diphosphate from 1-deoxy-D-xylulose 5-phosphate: step 1/6. Its function is as follows. Catalyzes the NADPH-dependent rearrangement and reduction of 1-deoxy-D-xylulose-5-phosphate (DXP) to 2-C-methyl-D-erythritol 4-phosphate (MEP). The polypeptide is 1-deoxy-D-xylulose 5-phosphate reductoisomerase (Nitratidesulfovibrio vulgaris (strain ATCC 29579 / DSM 644 / CCUG 34227 / NCIMB 8303 / VKM B-1760 / Hildenborough) (Desulfovibrio vulgaris)).